The primary structure comprises 726 residues: MAR-binding filament-like protein 1 (726 aa).

Residues 1–41 (MGFLIGGSCFVPSVPLHSRFLSSPSSSSSSSPSSSQFGLLC) constitute a chloroplast transit peptide. Residues 42 to 95 (SSNVAKFKRRRPTLASLNQEDGYEYDVASAKRRAFLLVGISVLPFLQLRSPALA) constitute a thylakoid transit peptide. Topologically, residues 96–124 (DERGNEIKTSKVDLETEVAVVSEGTSPNP) are lumenal, thylakoid. The chain crosses the membrane as a helical span at residues 125–145 (FLALLNGLGIFSAGVLGALYA). Residues 144 to 691 (YALARQDTKA…KGEILRMRSQ (548 aa)) adopt a coiled-coil conformation. Residues 146-726 (LARQDTKAAE…VRRRKSSTSS (581 aa)) are Stromal-facing. The disordered stretch occupies residues 678–726 (LGSAKGEILRMRSQPDSVKAVNSTDNKEKSDNTVTVKKVVRRRKSSTSS). Positions 691 to 701 (QPDSVKAVNST) are enriched in polar residues. Positions 715 to 722 (KVVRRRKS) match the Nuclear localization signal motif. The span at 715-726 (KVVRRRKSSTSS) shows a compositional bias: basic residues.

As to quaternary structure, interacts with PTST2; the interaction is essential for the initiation of starch granules biosynthesis in leaf chloroplasts, for the correct location of the process in the stromal spaces between the thylakoid membranes, and for the association of PTST2 with the thylakoid membranes. Post-translationally, predicted to be translocated into the thylakoid by the Tat system. The position of the transit peptide cleavages have not been experimentally proven.

The protein resides in the plastid. Its subcellular location is the chloroplast. It localises to the chloroplast thylakoid membrane. The protein localises to the chloroplast stroma. It is found in the chloroplast nucleoid. The protein resides in the nucleus. Its subcellular location is the nucleus matrix. Its function is as follows. DNA-binding protein required for the initiation of starch granules biosynthesis in leaf chloroplasts. Anchored to the thylakoid membranes with its C-terminus facing into the stroma where it is essential for localizing PTST2 and SS4 to the stromal spaces between the thylakoid membranes in order to begin starch granule formation. Associated with leaf chloroplastic nucleoids in vivo. Binds to various chloroplastic double-stranded DNA fragments without particular sequence specificity in vitro. May function at the interface between nucleoids and thylakoids possibly by anchoring nucleoids to the thylakoid membrane system in mature chloroplasts. Likely to participate in nuclear architecture by connecting chromatin with the nuclear matrix and potentially with the nuclear envelope. The polypeptide is MAR-binding filament-like protein 1 (Arabidopsis thaliana (Mouse-ear cress)).